The primary structure comprises 336 residues: Vacuolar protein sorting-associated protein 26B (336 aa).

Residues serine 302, serine 304, and serine 319 each carry the phosphoserine modification.

The protein belongs to the VPS26 family. Component of the heterotrimeric retromer cargo-selective complex (CSC), also described as vacuolar protein sorting VPS subcomplex (VPS,) formed by VPS26 (VPS26A or VPS26B), VPS29 and VPS35. The CSC has a highly elongated structure with VPS26 and VPS29 binding independently at opposite distal ends of VPS35 as central platform. The CSC is believed to associate with variable sorting nexins to form functionally distinct retromer complex variants. The originally described retromer complex (also called SNX-BAR retromer) is a pentamer containing the CSC and a heterodimeric membrane-deforming subcomplex formed between SNX1 or SNX2 and SNX5 or SNX6 (also called SNX-BAR subcomplex); the respective CSC and SNX-BAR subcomplexes associate with low affinity. The CSC associates with SNX3 to form a SNX3-retromer complex. The CSC associates with SNX27, the WASH complex and the SNX-BAR subcomplex to form the SNX27-retromer complex. Interacts with VPS29, VPS35, TBC1D5, GOLPH3, SNX27.

The protein localises to the cytoplasm. The protein resides in the membrane. It localises to the early endosome. Its subcellular location is the late endosome. In terms of biological role, acts as a component of the retromer cargo-selective complex (CSC). The CSC is believed to be the core functional component of retromer or respective retromer complex variants acting to prevent missorting of selected transmembrane cargo proteins into the lysosomal degradation pathway. The recruitment of the CSC to the endosomal membrane involves RAB7A and SNX3. The SNX-BAR retromer mediates retrograde transport of cargo proteins from endosomes to the trans-Golgi network (TGN) and is involved in endosome-to-plasma membrane transport for cargo protein recycling. The SNX3-retromer mediates the retrograde transport of WLS distinct from the SNX-BAR retromer pathway. The SNX27-retromer is believed to be involved in endosome-to-plasma membrane trafficking and recycling of a broad spectrum of cargo proteins. The CSC seems to act as recruitment hub for other proteins, such as the WASH complex and TBC1D5. May be involved in retrograde transport of SORT1 but not of IGF2R. Acts redundantly with VSP26A in SNX-27 mediated endocytic recycling of SLC2A1/GLUT1. This is Vacuolar protein sorting-associated protein 26B (VPS26B) from Homo sapiens (Human).